The chain runs to 68 residues: SERF-like protein YDL085C-A (68 aa).

Composition is skewed to basic and acidic residues over residues 1-43 (MARG…EILR) and 50-68 (DARREAEKLEKLKAEKTRR). The interval 1-68 (MARGNQRDLA…EKLKAEKTRR (68 aa)) is disordered. Ser-37 is subject to Phosphoserine.

This sequence belongs to the SERF family.

It is found in the cytoplasm. The protein localises to the nucleus. The polypeptide is SERF-like protein YDL085C-A (Saccharomyces cerevisiae (strain ATCC 204508 / S288c) (Baker's yeast)).